The following is a 1089-amino-acid chain: Translocase of chloroplast 120, chloroplastic (1089 aa).

Position 2 is an N-acetylglycine (G2). Disordered regions lie at residues A158–S179, T255–R339, and Q353–E381. A compositionally biased stretch (polar residues) spans E165–G176. Phosphoserine occurs at positions 179, 263, and 283. A compositionally biased stretch (basic and acidic residues) spans E300–E312. Residues A327–R339 are compositionally biased toward low complexity. Residues Q353–A374 are compositionally biased toward polar residues. Residues D454–Q683 form the AIG1-type G domain. Residues G463–S470 are G1. Residues G466–A471 and D485–G490 each bind GTP. S470 is a Mg(2+) binding site. The homodimerization stretch occupies residues D485 to Q488. A G2 region spans residues V489–K493. Positions D510 to G513 are G3. The segment at R548–S553 is homodimerization. The interval T582–A585 is G4. GTP contacts are provided by residues H583 and E631–N632. The G5 stretch occupies residues E631–H633. Residues P710 to E748 form a disordered region. Positions Q713–E737 are enriched in acidic residues. Residues R767–K788 adopt a coiled-coil conformation. Residues L1064 to Y1080 traverse the membrane as a helical segment.

Belongs to the TRAFAC class TrmE-Era-EngA-EngB-Septin-like GTPase superfamily. AIG1/Toc34/Toc159-like paraseptin GTPase family. TOC159 subfamily. Homodimer. Part of the TOC core complex that includes 1 protein for the specific recognition of transit peptides surrounded by a ring composed of four proteins forming translocation channels, and four to five GTP-binding proteins providing energy. This core complex can interact with components of the TIC complex to form a larger import complex. Chloroplastic protein precursor such as prSS (precursor of the RuBisCO small subunit) interacts with these complexes. The TOC complex contains a specific subset of polar lipids such as digalactosyldiacylglyceride (DGDG), phosphatidylcholine (PC) and phosphatidylglycerol (PG). Mg(2+) serves as cofactor. Phosphorylated by KOC1. As to expression, expressed in seedlings, flowers, and roots.

The protein resides in the plastid. The protein localises to the chloroplast outer membrane. It is found in the cytoplasm. GTPase involved in protein precursor import into chloroplasts. Seems to recognize chloroplast-destined precursor proteins and regulate their presentation to the translocation channel through GTP hydrolysis. Probably specialized in the import of nuclear encoded non-photosynthetic preproteins from the cytoplasm to the chloroplast. This is Translocase of chloroplast 120, chloroplastic from Arabidopsis thaliana (Mouse-ear cress).